The primary structure comprises 124 residues: Small ribosomal subunit protein uS13 (124 aa).

A disordered region spans residues 89-124; that stretch reads GRRHRQGLPVRGQRTKTNARTRKGPKRTVAGKKKAK. The segment covering 101–124 has biased composition (basic residues); the sequence is QRTKTNARTRKGPKRTVAGKKKAK.

Belongs to the universal ribosomal protein uS13 family. As to quaternary structure, part of the 30S ribosomal subunit. Forms a loose heterodimer with protein S19. Forms two bridges to the 50S subunit in the 70S ribosome.

Functionally, located at the top of the head of the 30S subunit, it contacts several helices of the 16S rRNA. In the 70S ribosome it contacts the 23S rRNA (bridge B1a) and protein L5 of the 50S subunit (bridge B1b), connecting the 2 subunits; these bridges are implicated in subunit movement. Contacts the tRNAs in the A and P-sites. The polypeptide is Small ribosomal subunit protein uS13 (Nocardioides sp. (strain ATCC BAA-499 / JS614)).